Here is a 541-residue protein sequence, read N- to C-terminus: Chaperonin GroEL (541 aa).

Residues 29-32, 86-90, glycine 413, and aspartate 495 contribute to the ATP site; these read TLGP and DGTTT.

Forms a cylinder of 14 subunits composed of two heptameric rings stacked back-to-back. Interacts with the co-chaperonin GroES.

It is found in the cytoplasm. It carries out the reaction ATP + H2O + a folded polypeptide = ADP + phosphate + an unfolded polypeptide.. Functionally, together with its co-chaperonin GroES, plays an essential role in assisting protein folding. The GroEL-GroES system forms a nano-cage that allows encapsulation of the non-native substrate proteins and provides a physical environment optimized to promote and accelerate protein folding. This is Chaperonin GroEL from Thermoanaerobacter brockii (Thermoanaerobium brockii).